The chain runs to 256 residues: Isoprenyl transferase (256 aa).

Aspartate 33 is a catalytic residue. Aspartate 33 contributes to the Mg(2+) binding site. Substrate-binding positions include 34-37, tryptophan 38, arginine 46, histidine 50, and 78-80; these read GNGR and STE. Asparagine 81 serves as the catalytic Proton acceptor. Residues tryptophan 82, arginine 84, arginine 201, and 207–209 each bind substrate; that span reads RIS. Glutamate 220 is a binding site for Mg(2+).

Belongs to the UPP synthase family. In terms of assembly, homodimer. Requires Mg(2+) as cofactor.

Functionally, catalyzes the condensation of isopentenyl diphosphate (IPP) with allylic pyrophosphates generating different type of terpenoids. The polypeptide is Isoprenyl transferase (Staphylococcus aureus (strain COL)).